Here is a 365-residue protein sequence, read N- to C-terminus: 5-hydroxytryptamine receptor 1F (365 aa).

The Extracellular segment spans residues 1 to 24 (MDFLNSSDQNLTSEELLNRMPSKI). N-linked (GlcNAc...) asparagine glycosylation is found at Asn-5 and Asn-10. Residues 25–49 (LVSLTLSGLALMTTTINSLVIAAII) form a helical membrane-spanning segment. The Cytoplasmic portion of the chain corresponds to 50 to 59 (VTRKLHHPAN). The helical transmembrane segment at 60-81 (YLICSLAVTDFLVAVLVMPFSI) threads the bilayer. Residues 82–96 (VYIVRESWIMGQVVC) lie on the Extracellular side of the membrane. Residues Cys-96 and Cys-172 are joined by a disulfide bond. A helical transmembrane segment spans residues 97-119 (DIWLSVDITCCTCSILHLSAIAL). Serotonin contacts are provided by Asp-103 and Cys-107. The short motif at 120-122 (DRY) is the DRY motif; important for ligand-induced conformation changes element. Residues 120–139 (DRYRAITDAVEYARKRTPKH) are Cytoplasmic-facing. Residues 140 to 159 (AGIMITIVWIISVFISMPPL) form a helical membrane-spanning segment. The Extracellular segment spans residues 160-178 (FWRHQGTSRDDECIIKHDH). Residues 179 to 202 (IVSTIYSTFGAFYIPLALILILYY) form a helical membrane-spanning segment. Residues 203-291 (KIYRAAKTLY…KISGTRERKA (89 aa)) lie on the Cytoplasmic side of the membrane. The helical transmembrane segment at 292–315 (ATTLGLILGAFVICWLPFFVKELV) threads the bilayer. Over 316–327 (VNVCDKCKISEE) the chain is Extracellular. Residues 328–350 (MSNFLAWLGYLNSLINPLIYTIF) traverse the membrane as a helical segment. Positions 343-347 (NPLIY) match the NPxxY motif; important for ligand-induced conformation changes and signaling motif. The Cytoplasmic portion of the chain corresponds to 351–365 (NEDFKKAFQKLVRCR).

The protein belongs to the G-protein coupled receptor 1 family.

It localises to the cell membrane. In terms of biological role, G-protein coupled receptor for 5-hydroxytryptamine (serotonin). Also functions as a receptor for various alkaloids and psychoactive substances. Ligand binding causes a conformation change that triggers signaling via guanine nucleotide-binding proteins (G proteins) and modulates the activity of downstream effectors, such as adenylate cyclase. HTR1F is coupled to G(i)/G(o) G alpha proteins and mediates inhibitory neurotransmission by inhibiting adenylate cyclase activity. This chain is 5-hydroxytryptamine receptor 1F (HTR1F), found in Pan troglodytes (Chimpanzee).